The sequence spans 781 residues: Catenin beta-1 (781 aa).

Ala2 carries the N-acetylalanine modification. Positions 2-23 (ATQADLMELDMAMEPDRKAAVS) are interaction with VCL. The residue at position 23 (Ser23) is a Phosphoserine; by GSK3-beta; alternate. Ser23 carries an O-linked (GlcNAc) serine; alternate glycan. The residue at position 29 (Ser29) is a Phosphoserine; by GSK3-beta. Phosphoserine; by GSK3-beta and HIPK2 occurs at positions 33 and 37. Positions 34 to 57 (GIHSGATTTAPSLSGKGNPEEEDV) are disordered. Residue Thr41 is modified to Phosphothreonine; by GSK3-beta. Phosphoserine is present on Ser45. Lys49 is subject to N6-acetyllysine. Phosphotyrosine; by PTK6 is present on Tyr64. Position 142 is a phosphotyrosine; by FYN and PTK6 (Tyr142). ARM repeat units follow at residues 151 to 191 (RAIP…IMRS), 193 to 234 (QMVS…IFKS), 235 to 276 (GGIP…VRLA), 277 to 318 (GGLQ…ILAS), 319 to 360 (GGPQ…IVEA), 361 to 389 (GGMQALGPHLTDPSQRLVQNCLWTLRNLS), 400 to 441 (GLLG…VCQV), 442 to 484 (GGIE…AQNA), 489 to 530 (YGLP…LREQ), 531 to 571 (GAIP…EIVE), 594 to 636 (NTIP…AEGA), and 637 to 666 (TAPLTELLHSRNEGVATYAAAVLFRMSEDK). The interaction with BCL9 stretch occupies residues 156-178 (LTKLLNDEDQVVVNKAAVMVHQL). Ser191 is subject to Phosphoserine. Position 246 is a phosphoserine; by CDK5 (Ser246). 2 positions are modified to phosphotyrosine: Tyr331 and Tyr333. Ser552 bears the Phosphoserine mark. Phosphothreonine is present on Thr556. Position 619 is an S-nitrosocysteine (Cys619). A Phosphoserine modification is found at Ser675. The segment at 720–781 (HSGGYGQDAL…NQLAWFDTDL (62 aa)) is disordered. Residues 734 to 745 (MMEHEMGGHHPG) are compositionally biased toward basic and acidic residues. Residues 772–781 (NQLAWFDTDL) are interaction with SCRIB.

Belongs to the beta-catenin family. As to quaternary structure, two separate complex-associated pools are found in the cytoplasm. The majority is present as component of an E-cadherin/ catenin adhesion complex composed of at least E-cadherin/CDH1 and beta-catenin/CTNNB1, and possibly alpha-catenin/CTNNA1; the complex is located to adherens junctions. The stable association of CTNNA1 is controversial as CTNNA1 was shown not to bind to F-actin when assembled in the complex. Alternatively, the CTNNA1-containing complex may be linked to F-actin by other proteins such as LIMA1. Another cytoplasmic pool is part of a large complex containing AXIN1, AXIN2, APC, CSNK1A1 and GSK3B that promotes phosphorylation on N-terminal Ser and Thr residues and ubiquitination of CTNNB1. Interacts directly with AXIN1; the interaction is regulated by CK2 via BTRC and its subsequent degradation by the proteasome. Interacts directly with AXIN1; the interaction is regulated by CDK2 phosphorylation. Wnt-dependent activation of DVL antagonizes the action of GSK3B. When GSK3B activity is inhibited the complex dissociates, CTNNB1 is dephosphorylated and is no longer targeted for destruction. The stabilized protein translocates to the nucleus, where it binds TCF/LEF-1 family members, BCL9, BCL9L and possibly also RUVBL1 and CHD8. Binds CTNNBIP and EP300. CTNNB1 forms a ternary complex with LEF1 and EP300 that is disrupted by CTNNBIP1 binding. Interacts with TAX1BP3 (via the PDZ domain); this interaction inhibits the transcriptional activity of CTNNB1. Interacts with AJAP1, BAIAP1, CARM1, CTNNA3, CXADR and PCDH11Y. Binds NHERF1. Interacts with GLIS2. Interacts with XIRP1. Interacts with PTPRU (via the cytoplasmic juxtamembrane domain) and with SLC30A9. Interacts with EMD. Interacts with SCRIB. Interacts with TNIK and TCF7L2. Interacts with SESTD1 and TRPC4. Interacts directly with AXIN1; the interaction is regulated by CDK2 phosphorylation of AXIN1. Interacts with CAV1. Interacts with TRPV4. The TRPV4 and CTNNB1 complex can interact with CDH1. Interacts with VCL. Interacts with PTPRJ. Interacts with PKT7. Interacts with NANOS1. Interacts with CDK2, NDRG2, NEK2 and CDK5. Found in a complex composed of MACF1, APC, AXIN1, CTNNB1 and GSK3B. Interacts with PTK6. Interacts with SOX7; this interaction may lead to proteasomal degradation of active CTNNB1 and thus inhibition of Wnt/beta-catenin-stimulated transcription. Identified in a complex with HINT1 and MITF. Interacts with FHIT. The CTNNB1 and TCF4 complex interacts with PML. Interacts with FERMT2. Identified in a complex with TCF4 and FERMT2. Interacts with RAPGEF2. Interacts with FAT1 (via the cytoplasmic domain). Interacts with RORA. May interact with P-cadherin/CDH3. Interacts with RNF220. Interacts with CTNND2. Interacts (via the C-terminal region) with CBY1. The complex composed, at least, of APC, CTNNB1 and GSK3B interacts with JPT1; the interaction requires the inactive form of GSK3B (phosphorylated at 'Ser-9'). Interacts with DLG5. Interacts with FAM53B; promoting translocation to the nucleus. Interacts with TMEM170B. Interacts with AHI1. Interacts with GID8. Component of an cadherin:catenin adhesion complex composed of at least of CDH26, beta-catenin/CTNNB1, alpha-catenin/CTNNA1 and p120 catenin/CTNND1. Forms a complex comprising APPL1, RUVBL2, APPL2, HDAC1 and HDAC2. Interacts with IRF2BPL; mediates the ubiquitination and degradation of CTNNB1. Interacts with AMFR. Interacts with LMBR1L. Interacts with SOX30; prevents interaction of CTNNB1 with TCF7L2/TCF4 and leads to inhibition of Wnt signaling. Interacts with SOX9; inhibiting CTNNB1 activity by competing with the binding sites of TCF/LEF within CTNNB1, thereby inhibiting the Wnt signaling. Interacts with SPN/CD43 cytoplasmic tail. Interacts (when phosphorylated at Tyr-333) with isoform M2 of PKM (PKM2); promoting transcription activation. Interacts with PKP2 (via HEAD domain). Interacts with CDH1. Interacts (when unphosphorylated) with FLYWCH1, perhaps preventing interaction of CTNNB1 with TCF4, and thereby regulating transcription activation; phosphorylation of CTNNB1 may inhibit the interaction. Interacts (via the central armadillo domains) with probable transcriptional regulator ADNP (via N-terminal region); interaction is direct and stabilizes CTNNB1 by modulating its phosphorylation by glycogen synthase kinase-3 beta GSK3B. Interacts with NR5A2. Interacts with DSG2; the interaction promotes localization of CTNNB1 at cell junctions thus reducing its nuclear localization and subsequent transcription of CTNNB1/TCF-target genes. Phosphorylation by GSK3B requires prior phosphorylation of Ser-45 by another kinase. Phosphorylation proceeds then from Thr-41 to Ser-33. Phosphorylated by NEK2. EGF stimulates tyrosine phosphorylation. Phosphorylated on Ser-33 and Ser-37 by HIPK2. This phosphorylation triggers proteasomal degradation. Phosphorylation at Ser-552 by AMPK promotes stabilization of the protein, enhancing TCF/LEF-mediated transcription. Phosphorylation on Ser-191 and Ser-246 by CDK5. Phosphorylation by CDK2 regulates insulin internalization. Phosphorylation by PTK6 at Tyr-64, Tyr-142, Tyr-331 and/or Tyr-333 with the predominant site at Tyr-64 is not essential for inhibition of transcriptional activity. Phosphorylation by SRC at Tyr-333 promotes interaction with isoform M2 of PKM (PKM2); promoting transcription activation. In terms of processing, ubiquitinated by the SCF(BTRC) E3 ligase complex when phosphorylated by GSK3B, leading to its degradation. Ubiquitinated by a E3 ubiquitin ligase complex containing UBE2D1, SIAH1, CACYBP/SIP, SKP1, APC and TBL1X, leading to its subsequent proteasomal degradation. Ubiquitinated and degraded following interaction with SOX9. Ubiquitinated via 'Lys-11'- and 'Lys-29'-linked ubiquitin chains by UBR5, leading to its stabilization. Post-translationally, S-nitrosylation at Cys-619 within adherens junctions promotes VEGF-induced, NO-dependent endothelial cell permeability by disrupting interaction with E-cadherin, thus mediating disassembly adherens junctions. O-glycosylation at Ser-23 decreases nuclear localization and transcriptional activity, and increases localization to the plasma membrane and interaction with E-cadherin CDH1. In terms of processing, deacetylated at Lys-49 by SIRT1. In terms of tissue distribution, expressed in the testis.

It is found in the cytoplasm. Its subcellular location is the nucleus. The protein resides in the cytoskeleton. The protein localises to the cell junction. It localises to the adherens junction. It is found in the cell membrane. Its subcellular location is the microtubule organizing center. The protein resides in the centrosome. The protein localises to the spindle pole. It localises to the synapse. It is found in the cilium basal body. Functionally, key downstream component of the canonical Wnt signaling pathway. In the absence of Wnt, forms a complex with AXIN1, AXIN2, APC, CSNK1A1 and GSK3B that promotes phosphorylation on N-terminal Ser and Thr residues and ubiquitination of CTNNB1 via BTRC and its subsequent degradation by the proteasome. In the presence of Wnt ligand, CTNNB1 is not ubiquitinated and accumulates in the nucleus, where it acts as a coactivator for transcription factors of the TCF/LEF family, leading to activate Wnt responsive genes. Also acts as a coactivator for other transcription factors, such as NR5A2. Promotes epithelial to mesenchymal transition/mesenchymal to epithelial transition (EMT/MET) via driving transcription of CTNNB1/TCF-target genes. Involved in the regulation of cell adhesion, as component of an E-cadherin:catenin adhesion complex. Acts as a negative regulator of centrosome cohesion. Involved in the CDK2/PTPN6/CTNNB1/CEACAM1 pathway of insulin internalization. Blocks anoikis of malignant kidney and intestinal epithelial cells and promotes their anchorage-independent growth by down-regulating DAPK2. Disrupts PML function and PML-NB formation by inhibiting RANBP2-mediated sumoylation of PML. Promotes neurogenesis by maintaining sympathetic neuroblasts within the cell cycle. Involved in chondrocyte differentiation via interaction with SOX9: SOX9-binding competes with the binding sites of TCF/LEF within CTNNB1, thereby inhibiting the Wnt signaling. Acts as a positive regulator of odontoblast differentiation during mesenchymal tooth germ formation, via promoting the transcription of differentiation factors such as LEF1, BMP2 and BMP4. Activity is repressed in a MSX1-mediated manner at the bell stage of mesenchymal tooth germ formation which prevents premature differentiation of odontoblasts. This is Catenin beta-1 from Rattus norvegicus (Rat).